We begin with the raw amino-acid sequence, 363 residues long: Histidinol-phosphate aminotransferase (363 aa).

Lys-218 carries the post-translational modification N6-(pyridoxal phosphate)lysine.

Belongs to the class-II pyridoxal-phosphate-dependent aminotransferase family. Histidinol-phosphate aminotransferase subfamily. Homodimer. Pyridoxal 5'-phosphate is required as a cofactor.

It carries out the reaction L-histidinol phosphate + 2-oxoglutarate = 3-(imidazol-4-yl)-2-oxopropyl phosphate + L-glutamate. It participates in amino-acid biosynthesis; L-histidine biosynthesis; L-histidine from 5-phospho-alpha-D-ribose 1-diphosphate: step 7/9. The polypeptide is Histidinol-phosphate aminotransferase (Xanthomonas oryzae pv. oryzae (strain MAFF 311018)).